Consider the following 70-residue polypeptide: Pyruvate-flavodoxin oxidoreductase (70 aa).

It belongs to the pyruvate:ferredoxin/flavodoxin oxidoreductase family.

It carries out the reaction oxidized [flavodoxin] + pyruvate + CoA + 2 H(+) = reduced [flavodoxin] + acetyl-CoA + CO2. Oxidoreductase required for the transfer of electrons from pyruvate to flavodoxin, which reduces nitrogenase. This is Pyruvate-flavodoxin oxidoreductase (nifJ) from Anabaena variabilis.